The chain runs to 417 residues: Gamma-glutamyl phosphate reductase (417 aa).

It belongs to the gamma-glutamyl phosphate reductase family.

The protein resides in the cytoplasm. It carries out the reaction L-glutamate 5-semialdehyde + phosphate + NADP(+) = L-glutamyl 5-phosphate + NADPH + H(+). The protein operates within amino-acid biosynthesis; L-proline biosynthesis; L-glutamate 5-semialdehyde from L-glutamate: step 2/2. Its function is as follows. Catalyzes the NADPH-dependent reduction of L-glutamate 5-phosphate into L-glutamate 5-semialdehyde and phosphate. The product spontaneously undergoes cyclization to form 1-pyrroline-5-carboxylate. The sequence is that of Gamma-glutamyl phosphate reductase from Desulfitobacterium hafniense (strain DSM 10664 / DCB-2).